Reading from the N-terminus, the 651-residue chain is p-hydroxybenzoic acid efflux pump subunit AaeB (651 aa).

11 helical membrane passes run 11-31 (FAFK…HLQL), 41-61 (AAIV…SGAI), 67-87 (LRII…VLTI), 91-111 (VLTL…SSLV), 119-139 (FGLA…TPLL), 150-170 (EIVL…PRSI), 368-388 (LFWL…IAVV), 405-425 (FLLG…FIIP), 429-449 (QSML…GIEV), 460-480 (LAST…VSLF), and 481-501 (LDSA…LLLI).

This sequence belongs to the aromatic acid exporter ArAE (TC 2.A.85) family.

Its subcellular location is the cell inner membrane. In terms of biological role, forms an efflux pump with AaeA. Could function as a metabolic relief valve, allowing to eliminate certain compounds when they accumulate to high levels in the cell. The sequence is that of p-hydroxybenzoic acid efflux pump subunit AaeB from Yersinia enterocolitica serotype O:8 / biotype 1B (strain NCTC 13174 / 8081).